The sequence spans 217 residues: Monomethylamine corrinoid protein 2 (217 aa).

A B12-binding N-terminal domain is found at 1 to 91; sequence MTNTEIFDKL…ELEKNKKEGD (91 aa). A B12-binding domain is found at 93 to 217; it reads AGLAITFVAE…AAKVALEVMK (125 aa). Methylcob(III)alamin is bound at residue His106.

The protein belongs to the methylamine corrinoid protein family. Can form a complex with MtmB.

It participates in one-carbon metabolism; methanogenesis from methylamine. Functionally, acts as a methyl group carrier between MtmB and MtbA. The chain is Monomethylamine corrinoid protein 2 (mtmC2) from Methanosarcina barkeri.